The sequence spans 1056 residues: Potassium transporter TRK1 (1056 aa).

Topologically, residues 1 to 46 are cytoplasmic; that stretch reads MLYRVSGFYKRHTRNFTNIDYGYYIRNFIHHIASKIYPYAKVVLPN. A helical transmembrane segment spans residues 47 to 67; sequence FRAAHYFYILTLVILGSILVY. Residues 68 to 73 are Extracellular-facing; it reads PVKTCA. Residues 74–90 lie within the membrane without spanning it; it reads YIDVLFFTAGASTQAGL. Topologically, residues 91 to 99 are extracellular; that stretch reads NTVNVNDLS. The helical transmembrane segment at 100–122 threads the bilayer; that stretch reads LYQQIVLYLLATLATPIFIHGSL. Over 123-622 the chain is Cytoplasmic; sequence LFVRLYYFER…LGGIEYRAVK (500 aa). Disordered stretches follow at residues 180 to 276, 290 to 350, and 404 to 571; these read REAE…IDPE, KNQE…EDED, and PWTS…SIEN. Over residues 186–203 the composition is skewed to low complexity; that stretch reads SSSSPQSSSSQTSQPVST. Basic and acidic residues predominate over residues 236 to 245; the sequence is EKIHFEEPQR. Over residues 335-344 the composition is skewed to polar residues; it reads PATNSVGTGN. A compositionally biased stretch (low complexity) spans 412–423; the sequence is TLSNSSKKGSLS. Composition is skewed to acidic residues over residues 428–449 and 469–487; these read DTED…SDIS and YEED…DDGE. Positions 521–533 are enriched in polar residues; that stretch reads RSNTLDTPQQNTS. The segment covering 537-549 has biased composition (basic residues); sequence KIRKKAPKRKTPR. A compositionally biased stretch (polar residues) spans 553-563; sequence NASFNQHSNVS. A helical transmembrane segment spans residues 623–646; sequence LLIKIIVVYYVGFNIIPGVMLSIW. Over 647 to 665 the chain is Extracellular; sequence IYCMPHYKNLMISSSISPA. An intramembrane segment occupies 666–682; that stretch reads WWAFFTSQSSFNDLGLT. Residues 683 to 693 lie on the Extracellular side of the membrane; that stretch reads LTSNSMMSFNQ. A helical membrane pass occupies residues 694–710; sequence NAFVQILCSFLIVIGNT. Topologically, residues 711–754 are cytoplasmic; that stretch reads GFPILLRFIIWVMFKTARPLSLYKESLGFLLDHPRRCFTLLFPS. The chain crosses the membrane as a helical span at residues 755–778; sequence VPTWWLFFILVVLNGFDLVIFCIL. The Extracellular segment spans residues 779 to 793; the sequence is DLHDDTFKGVDMGYR. Residues 794-810 lie within the membrane without spanning it; sequence VLNGLFQAFCTRTVGFS. The Extracellular segment spans residues 811–817; the sequence is VMDLSQL. The chain crosses the membrane as a helical span at residues 818–841; the sequence is HAATQVSYLIMMYISVLPIAISVR. Over 842 to 874 the chain is Cytoplasmic; the sequence is RTNVYEEQSLGVYAKENAEGVDESAPSNYVGSH. The chain crosses the membrane as a helical span at residues 875 to 896; sequence LRNQLSYDLWYICLGLFIICIA. At 897 to 909 the chain is on the extracellular side; sequence EGKRLKEQDLRFS. The stretch at 910-928 is an intramembrane region; the sequence is IFAVLFEIVSAYGTVGMSM. Residues 929 to 942 are Extracellular-facing; sequence GYPGVDCSLSGEFN. A helical transmembrane segment spans residues 943–965; sequence VISKLVIIAMMIRGRHRGLPYTI. Residues 966-1056 lie on the Cytoplasmic side of the membrane; the sequence is DRAIMLPNAA…RYVVRTVSEV (91 aa).

It belongs to the TrkH potassium transport family.

It is found in the cell membrane. It catalyses the reaction K(+)(in) = K(+)(out). The enzyme catalyses chloride(in) = chloride(out). Its activity is regulated as follows. TRK1-mediated chloride conductance is blocked by 4,4'-diisothiocyanatostilbene-2,2'-disulfonic acid. In terms of biological role, potassium transporter that mediates K(+) influx, as well as Cl(-) efflux as a secondary function. TRK1 is the major K(+) uptake transporter that regulates membrane potential and intracellular pH. The TRK1-mediated Cl(-) efflux should serve as a Cl(-) detoxification route and may play a role in sustaining C.albicans on mammalian epithelial surfaces, or in physiological saline solutions such as saliva. Its function is as follows. Mediates candidacidal activities of cysteine-free peptides, but not of defensins. The hallmark of salivary gland-secreted histatin-5 (Hst 5) killing of C.albicans is the rapid efflux of cellular ATP and other small nucleotides and ions from the cell as well as concurrent intracellular uptake of propidium iodide (PI). TRK1 is the channel for Hst 5-induced killing and histatin-5 may directly or indirectly alter TRK1 function, allowing the efflux of larger anions, including ATP, and the influx of small cationic dyes, such as PI. This chain is Potassium transporter TRK1, found in Candida albicans (strain SC5314 / ATCC MYA-2876) (Yeast).